Consider the following 302-residue polypeptide: RING-H2 finger protein ATL38 (302 aa).

Residues 15 to 35 (LLVITIILFAIFIVGLASVCF) traverse the membrane as a helical segment. An RING-type; atypical zinc finger spans residues 96–138 (CAVCICEFEDHETLRLMPECCHVFHADCVSVWLSDHSTCPLCR). Positions 279 to 302 (GEAVAPSKDSRRISVEQSQLDDRV) are disordered. The segment covering 286–302 (KDSRRISVEQSQLDDRV) has biased composition (basic and acidic residues).

The protein belongs to the RING-type zinc finger family. ATL subfamily.

It localises to the membrane. The enzyme catalyses S-ubiquitinyl-[E2 ubiquitin-conjugating enzyme]-L-cysteine + [acceptor protein]-L-lysine = [E2 ubiquitin-conjugating enzyme]-L-cysteine + N(6)-ubiquitinyl-[acceptor protein]-L-lysine.. It functions in the pathway protein modification; protein ubiquitination. The chain is RING-H2 finger protein ATL38 (ATL38) from Arabidopsis thaliana (Mouse-ear cress).